The sequence spans 23 residues: Coenzyme PQQ synthesis protein A (23 aa).

The pyrroloquinoline quinone (Glu-Tyr) cross-link spans 15 to 19 (EVTMY).

The protein belongs to the PqqA family.

It participates in cofactor biosynthesis; pyrroloquinoline quinone biosynthesis. Its function is as follows. Required for coenzyme pyrroloquinoline quinone (PQQ) biosynthesis. PQQ is probably formed by cross-linking a specific glutamate to a specific tyrosine residue and excising these residues from the peptide. The chain is Coenzyme PQQ synthesis protein A from Ectopseudomonas mendocina (strain ymp) (Pseudomonas mendocina).